Reading from the N-terminus, the 195-residue chain is Putative manganese efflux pump MntP (195 aa).

A run of 6 helical transmembrane segments spans residues 3–23 (LSATLILAFGMSMDAFAASVG), 40–60 (GLIFGVIEAITPLIGWGLGLL), 68–88 (WDHWVAFTLLAFLGGRMVLAG), 106–126 (VLIATAIATSLDALAIGVGLA), 132–152 (ILHAALLIGLATLIMSTIGML), and 165–185 (AEIIGGLILIGIGCNILYSHI).

The protein belongs to the MntP (TC 9.B.29) family.

It is found in the cell inner membrane. Probably functions as a manganese efflux pump. The polypeptide is Putative manganese efflux pump MntP (Sodalis glossinidius (strain morsitans)).